The sequence spans 274 residues: Orotidine 5'-phosphate decarboxylase (274 aa).

Residues D40, 62–64, 93–102, Y227, and R245 contribute to the substrate site; these read KTH and DRKFVDIGNT. K95 acts as the Proton donor in catalysis.

It belongs to the OMP decarboxylase family.

It carries out the reaction orotidine 5'-phosphate + H(+) = UMP + CO2. It participates in pyrimidine metabolism; UMP biosynthesis via de novo pathway; UMP from orotate: step 2/2. In Coccidioides posadasii (strain RMSCC 757 / Silveira) (Valley fever fungus), this protein is Orotidine 5'-phosphate decarboxylase (URA3).